Here is a 271-residue protein sequence, read N- to C-terminus: 5-deoxy-glucuronate isomerase (271 aa).

It belongs to the isomerase IolB family.

It catalyses the reaction 5-deoxy-D-glucuronate = 5-dehydro-2-deoxy-D-gluconate. The protein operates within polyol metabolism; myo-inositol degradation into acetyl-CoA; acetyl-CoA from myo-inositol: step 4/7. Involved in the isomerization of 5-deoxy-glucuronate (5DG) to 5-dehydro-2-deoxy-D-gluconate (DKG or 2-deoxy-5-keto-D-gluconate). The polypeptide is 5-deoxy-glucuronate isomerase (iolB) (Bacillus subtilis (strain 168)).